The primary structure comprises 574 residues: M-phase inducer phosphatase 2 (574 aa).

Disordered regions lie at residues 31-51 (GFGF…SSSP) and 90-110 (RRTS…AGLC). A Phosphoserine modification is found at Ser-42. Low complexity predominate over residues 90–105 (RRTSECSLSSESSESS). The residue at position 166 (Ser-166) is a Phosphoserine; by MELK. Residue Ser-246 is modified to Phosphoserine. Ser-319 carries the post-translational modification Phosphoserine; by MAPKAPK2 and MELK. Ser-319 carries the phosphoserine; by MELK and MAPK14 modification. The disordered stretch occupies residues 339 to 359 (DVPVLSKRRKSGTPLEEQQLE). Ser-349 is modified (phosphoserine; by AURKA). A Phosphoserine; by BRSK1 and MAPK14 modification is found at Ser-370. The 108-residue stretch at 425–532 (IVEKFVIVDC…FFPQHPNFCE (108 aa)) folds into the Rhodanese domain. The active site involves Cys-481. Ser-557 bears the Phosphoserine mark.

This sequence belongs to the MPI phosphatase family. In terms of assembly, interacts with MAPK14 and 14-3-3 proteins. Post-translationally, phosphorylated by BRSK1 in vitro. Phosphorylated by CHEK1, which inhibits the activity of this protein. Phosphorylation at Ser-349 by AURKA might locally participate in the control of the onset of mitosis. Phosphorylation by MELK at Ser-166 promotes localization to the centrosome and the spindle poles during mitosis. Phosphorylation at Ser-319 and Ser-370 by MAPK14 is required for binding to 14-3-3 proteins.

It is found in the cytoplasm. The protein localises to the cytoskeleton. The protein resides in the microtubule organizing center. It localises to the centrosome. Its subcellular location is the spindle pole. The catalysed reaction is O-phospho-L-tyrosyl-[protein] + H2O = L-tyrosyl-[protein] + phosphate. Stimulated by B-type cyclins. Its function is as follows. Tyrosine protein phosphatase which functions as a dosage-dependent inducer of mitotic progression. Directly dephosphorylates CDK1 and stimulates its kinase activity. Required for G2/M phases of the cell cycle progression and abscission during cytokinesis in a ECT2-dependent manner. The three isoforms seem to have a different level of activity. This is M-phase inducer phosphatase 2 (Cdc25b) from Rattus norvegicus (Rat).